Here is a 273-residue protein sequence, read N- to C-terminus: Large ribosomal subunit protein uL2 (273 aa).

Residues 221-263 (RGTAMNPVDHPHGGGEGRNFGKHPVTPWGVQTKGKKTRHNKRT) form a disordered region. Basic residues predominate over residues 253-263 (KGKKTRHNKRT).

Belongs to the universal ribosomal protein uL2 family. As to quaternary structure, part of the 50S ribosomal subunit. Forms a bridge to the 30S subunit in the 70S ribosome.

One of the primary rRNA binding proteins. Required for association of the 30S and 50S subunits to form the 70S ribosome, for tRNA binding and peptide bond formation. It has been suggested to have peptidyltransferase activity; this is somewhat controversial. Makes several contacts with the 16S rRNA in the 70S ribosome. The protein is Large ribosomal subunit protein uL2 of Histophilus somni (strain 129Pt) (Haemophilus somnus).